A 291-amino-acid polypeptide reads, in one-letter code: 33 kDa chaperonin (291 aa).

2 cysteine pairs are disulfide-bonded: C229-C231 and C262-C265.

Belongs to the HSP33 family. In terms of processing, under oxidizing conditions two disulfide bonds are formed involving the reactive cysteines. Under reducing conditions zinc is bound to the reactive cysteines and the protein is inactive.

Its subcellular location is the cytoplasm. Functionally, redox regulated molecular chaperone. Protects both thermally unfolding and oxidatively damaged proteins from irreversible aggregation. Plays an important role in the bacterial defense system toward oxidative stress. This chain is 33 kDa chaperonin, found in Vibrio parahaemolyticus serotype O3:K6 (strain RIMD 2210633).